Reading from the N-terminus, the 525-residue chain is uncharacterized protein (525 aa).

At Ser-55 the chain carries Phosphoserine. 13 consecutive transmembrane segments (helical) span residues 81 to 101 (AYIV…PNFY), 120 to 140 (LLGQ…LGPL), 147 to 167 (KLVY…CALA), 173 to 193 (LVIS…NVAG), 208 to 228 (MYMF…GTGV), 238 to 258 (WLYW…VFTP), 295 to 315 (FVFF…SLGI), 318 to 338 (GFVN…YFSI), 350 to 370 (YMAA…QCWL), 388 to 408 (FIMT…FAFC), 413 to 433 (IHYI…YHIW), 454 to 474 (AFEL…ALMF), and 484 to 504 (AVVG…YFYG).

Belongs to the major facilitator superfamily. CAR1 family.

The protein localises to the membrane. This is an uncharacterized protein from Schizosaccharomyces pombe (strain 972 / ATCC 24843) (Fission yeast).